The following is a 34-amino-acid chain: Leader peptide SpeFL (34 aa).

The tract at residues 1-13 is sensor domain; the sequence is MENNSRTMPHIRR. The short motif at 10 to 16 is the Ornithine recognition loop element; sequence HIRRTTH. Residue R13 coordinates L-ornithine. Positions 14–34 are effector domain; that stretch reads TTHIMKFAHRNSFDFHFFNAR.

Belongs to the speF operon leader peptide family. Binds ornithine in stalled 70S ribosomes, blocking the upper two-thirds of the exit tunnel. Contacts 23S rRNA and ribosomal proteins L4 and L22.

A small protein (arrest peptide) encoded upstream of inducible ornithine carboxylase gene (speF) that controls expression of downstream genes (speF and patE) by nascent chain-translational arrest and transcriptional attenuation. In the presence of ornithine a toeprint due to ribosomal arrest can be seen on the speFL transcript. Only L-ornithine (not other tested amino acids) has this effect. It is thought that in the presence of ornithine, ribosomal stalling on speFL prevents binding of Rho transcription termination factor to a downstream rut site allowing transcription of the operon. In the absence of ornithine, ribosomes terminate translation and are recycled, exposing the rut site allowing Rho to bind and prematurely terminate transcription. The presence of a pair of rare Arg codons could slow down translation to prevent polysome accumulation and to expose the rut site to Rho. This Escherichia coli (strain K12) protein is Leader peptide SpeFL.